We begin with the raw amino-acid sequence, 179 residues long: Replication restart protein DnaT (179 aa).

Residues 156–179 (GGLPKRDVNTVSEPDSQIPPGFRG) form a disordered region.

This sequence belongs to the DnaT family. As to quaternary structure, homooligomerizes. Interacts with PriB. Component of the replication restart primosome. Primosome assembly occurs via a 'hand-off' mechanism. PriA binds to replication forks, subsequently PriB then DnaT bind; DnaT then displaces ssDNA to generate the helicase loading substrate.

In terms of biological role, involved in the restart of stalled replication forks, which reloads the replicative helicase on sites other than the origin of replication. Can function in multiple replication restart pathways. Displaces ssDNA from a PriB-ssDNA complex. Probably forms a spiral filament on ssDNA. The sequence is that of Replication restart protein DnaT from Escherichia coli O7:K1 (strain IAI39 / ExPEC).